We begin with the raw amino-acid sequence, 319 residues long: MKPENKLPVLDLISAEMKTVVNTLQPDLPPWPATGTIAEQRQYYTLERRFWNVGAPEMATRAYRVPTKYGQVKTRIFYPQPDSPATLFYLHGGGFILGNLDTHDRIMRLLASYSQCTVIGIDYTLSPEARFPQAIEEIVAACCYFHQQAEDYQINMSRIGFAGDSAGAMLALASALWLRDKQIDCGKVAGVLLWYGLYGLRDSVTRRLLGGVWDGLTQQDLQMYEEAYLSNDADRESPYYCLFNNDLTREVPPCFIAGAEFDPLLDDSRLLYQTLAAHQQPCEFKLYPGTLHAFLHYSRMMKTADEALLDGAQFFTAQL.

The short motif at 91 to 93 is the Involved in the stabilization of the negatively charged intermediate by the formation of the oxyanion hole element; the sequence is HGG. Residues Ser-165, Asp-262, and His-292 contribute to the active site.

Belongs to the 'GDXG' lipolytic enzyme family. As to quaternary structure, homodimer. Interacts with MalT and MelA.

The protein localises to the cytoplasm. Functionally, displays esterase activity towards short chain fatty esters (acyl chain length of up to 8 carbons). Able to hydrolyze triacetylglycerol (triacetin) and tributyrylglycerol (tributyrin), but not trioleylglycerol (triolein) or cholesterol oleate. Negatively regulates MalT activity by antagonizing maltotriose binding. Inhibits MelA galactosidase activity. This chain is Acetyl esterase, found in Escherichia coli O127:H6 (strain E2348/69 / EPEC).